The chain runs to 410 residues: Magnesium transporter NIPA3 (410 aa).

Residues 1–67 (MGAQVRLPPG…ISANVENKYS (67 aa)) are Extracellular-facing. N25, N35, N50, and N55 each carry an N-linked (GlcNAc...) asparagine glycan. The chain crosses the membrane as a helical span at residues 68 to 88 (LYVGLVLAVSSSIFIGSSFIL). The Cytoplasmic portion of the chain corresponds to 89-114 (KKKGLLQLASKGFTRAGQGGHSYLKE). The chain crosses the membrane as a helical span at residues 115–135 (WLWWVGLLSMGAGEAANFAAY). A topological domain (extracellular) is located at residue A136. Residues 137 to 157 (FAPATLVTPLGALSVLISAIL) traverse the membrane as a helical segment. At 158–165 (SSYFLNEH) the chain is on the cytoplasmic side. Residues 166–186 (LNIHGKIGCILSILGSTVMVI) traverse the membrane as a helical segment. The Extracellular segment spans residues 187-207 (HAPQEEEVTSLHEMEMKLRDP). A helical membrane pass occupies residues 208-228 (GFISFAVIITVISLVLILIVA). Residues 229–233 (PKKGQ) lie on the Cytoplasmic side of the membrane. The chain crosses the membrane as a helical span at residues 234-254 (TNILVYISICSLIGAFSVSSV). Residues 255–273 (KGLGIAIKELIEWKPVYKH) lie on the Extracellular side of the membrane. A helical membrane pass occupies residues 274–294 (PLVFVLLAVLVLSVTTQINYL). Residues 295–305 (NKALDTFNTSL) are Cytoplasmic-facing. The chain crosses the membrane as a helical span at residues 306 to 326 (VTPIYYVFFTSMVVTCSAILF). Residues 327–336 (QEWYGMTAGD) are Extracellular-facing. The helical transmembrane segment at 337 to 357 (IIGTLSGFFTIIIGIFLLHAF) threads the bilayer. Residues 358–410 (KNTDITWSELTSTAKKEAVSLNVNENNYVLLENLECSAPGYNDDVTLFSRTDD) lie on the Cytoplasmic side of the membrane.

Belongs to the NIPA family. Expressed in the pancreatic islets.

The protein resides in the golgi apparatus membrane. The enzyme catalyses Mg(2+)(in) = Mg(2+)(out). Acts as a Mg(2+) transporter. Can also transport other divalent cations such as Fe(2+), Sr(2+), Ba(2+), Mn(2+), Cu(2+) and Co(2+) but to a much less extent than Mg(2+). This Homo sapiens (Human) protein is Magnesium transporter NIPA3 (NIPAL1).